A 382-amino-acid polypeptide reads, in one-letter code: uncharacterized protein (382 aa).

The next 12 helical transmembrane spans lie at 14 to 34, 45 to 65, 79 to 99, 102 to 122, 131 to 151, 157 to 177, 204 to 224, 235 to 255, 270 to 290, 291 to 311, 325 to 345, and 348 to 368; these read GLLL…LWLA, VVSS…GYVI, FIFA…SWLA, FVAG…LMCS, LLAA…LLVS, LMSV…PLLF, LGVN…GLMP, ASIG…QWPI, VQVF…AMAP, ALFI…AWAC, ALLL…AMLM, and FSDN…LLML.

The protein belongs to the major facilitator superfamily. YcaD (TC 2.A.1.26) family.

It is found in the cell inner membrane. This is an uncharacterized protein from Escherichia coli O6:K15:H31 (strain 536 / UPEC).